Reading from the N-terminus, the 497-residue chain is Bifunctional protein GlmU (497 aa).

The interval 1 to 243 (MTSSTTSSTD…SALVAGVNDR (243 aa)) is pyrophosphorylase. Residues 16–19 (LAAG), K30, Q87, and 92–93 (GT) contribute to the UDP-N-acetyl-alpha-D-glucosamine site. D118 is a binding site for Mg(2+). Residues G153, E168, N183, and N241 each coordinate UDP-N-acetyl-alpha-D-glucosamine. Residue N241 participates in Mg(2+) binding. Positions 244 to 264 (VQLAALGAELNRRIVTAHQRA) are linker. Positions 265-497 (GVTVIDPGST…LGHHDDSQGS (233 aa)) are N-acetyltransferase. Residues R346 and K364 each contribute to the UDP-N-acetyl-alpha-D-glucosamine site. The active-site Proton acceptor is the H376. Residues Y379 and N390 each coordinate UDP-N-acetyl-alpha-D-glucosamine. Acetyl-CoA is bound by residues A393, 399-400 (NY), S418, and A436. Residues 473–497 (ARAAERASGEAAEQALGHHDDSQGS) are disordered. The span at 488–497 (LGHHDDSQGS) shows a compositional bias: basic and acidic residues.

It in the N-terminal section; belongs to the N-acetylglucosamine-1-phosphate uridyltransferase family. The protein in the C-terminal section; belongs to the transferase hexapeptide repeat family. Homotrimer. Requires Mg(2+) as cofactor.

The protein localises to the cytoplasm. The enzyme catalyses alpha-D-glucosamine 1-phosphate + acetyl-CoA = N-acetyl-alpha-D-glucosamine 1-phosphate + CoA + H(+). The catalysed reaction is N-acetyl-alpha-D-glucosamine 1-phosphate + UTP + H(+) = UDP-N-acetyl-alpha-D-glucosamine + diphosphate. The protein operates within nucleotide-sugar biosynthesis; UDP-N-acetyl-alpha-D-glucosamine biosynthesis; N-acetyl-alpha-D-glucosamine 1-phosphate from alpha-D-glucosamine 6-phosphate (route II): step 2/2. It functions in the pathway nucleotide-sugar biosynthesis; UDP-N-acetyl-alpha-D-glucosamine biosynthesis; UDP-N-acetyl-alpha-D-glucosamine from N-acetyl-alpha-D-glucosamine 1-phosphate: step 1/1. It participates in bacterial outer membrane biogenesis; LPS lipid A biosynthesis. Its function is as follows. Catalyzes the last two sequential reactions in the de novo biosynthetic pathway for UDP-N-acetylglucosamine (UDP-GlcNAc). The C-terminal domain catalyzes the transfer of acetyl group from acetyl coenzyme A to glucosamine-1-phosphate (GlcN-1-P) to produce N-acetylglucosamine-1-phosphate (GlcNAc-1-P), which is converted into UDP-GlcNAc by the transfer of uridine 5-monophosphate (from uridine 5-triphosphate), a reaction catalyzed by the N-terminal domain. The chain is Bifunctional protein GlmU from Mycobacterium sp. (strain JLS).